A 205-amino-acid polypeptide reads, in one-letter code: Urease accessory protein UreG (205 aa).

Residue 14–21 coordinates GTP; sequence GPVGSGKT.

It belongs to the SIMIBI class G3E GTPase family. UreG subfamily. Homodimer. UreD, UreF and UreG form a complex that acts as a GTP-hydrolysis-dependent molecular chaperone, activating the urease apoprotein by helping to assemble the nickel containing metallocenter of UreC. The UreE protein probably delivers the nickel.

Its subcellular location is the cytoplasm. Functionally, facilitates the functional incorporation of the urease nickel metallocenter. This process requires GTP hydrolysis, probably effectuated by UreG. This Enterobacter sp. (strain 638) protein is Urease accessory protein UreG.